Reading from the N-terminus, the 66-residue chain is Large ribosomal subunit protein bL35 (66 aa).

Belongs to the bacterial ribosomal protein bL35 family.

The chain is Large ribosomal subunit protein bL35 from Brucella anthropi (strain ATCC 49188 / DSM 6882 / CCUG 24695 / JCM 21032 / LMG 3331 / NBRC 15819 / NCTC 12168 / Alc 37) (Ochrobactrum anthropi).